The sequence spans 631 residues: MVDFPTRFDVIVIGGGHAGTEAALAAARMGVKTLLLTHNVETLGQMSCNPAIGGIGKSHLVKEIDALGGAMAEATDKGGIQFRILNSRKGPAVRATRAQADRVLYKAAIRHTLENQPNLWIFQQACDDLIVEQDQVRGVVTQMGLRFHADNVVLTTGTFLGGLIHIGLENYSGGRAGDPPSIALARRLRELPLRVGRLKTGTPPRIDGRSVVFSVMTEQPGDTPIPVMSFLGSKEQHPEQVSCWITHTNARTHEIIAANLDRSPMYSGVIEGIGPRYCPSIEDKIHRFADKESHQVFLEPEGLTTHELYPNGISTSLPFDVQLQIVRSIRGMENAHIVRPGYAIEYDFFDPRDLKYSLETKVIGGLFFAGQINGTTGYEEAGAQGLLAGANAALRAQGKDSWCPRRDEAYIGVLVDDLITLGTQEPYRMFTSRAEYRLILREDNADLRLTEKGRELGLVDDRRWAAFEAKREGIEREEQRLKSTWVRPNTPQGEAIAERFGTPLTHEYNLLNLLSRPEIDYASLVEITGDAVDNPQVAEQVEIRTKYAGYIDRQQEEIARLRASEDTRLPVDIDYLGISGLSKEIQNKLNQARPETLGQASRIPGVTPAAISLLLIHLKKRASGRQLEQSA.

14-19 (GGGHAG) provides a ligand contact to FAD. 274–288 (GPRYCPSIEDKIHRF) provides a ligand contact to NAD(+).

It belongs to the MnmG family. In terms of assembly, homodimer. Heterotetramer of two MnmE and two MnmG subunits. It depends on FAD as a cofactor.

The protein resides in the cytoplasm. Its function is as follows. NAD-binding protein involved in the addition of a carboxymethylaminomethyl (cmnm) group at the wobble position (U34) of certain tRNAs, forming tRNA-cmnm(5)s(2)U34. This chain is tRNA uridine 5-carboxymethylaminomethyl modification enzyme MnmG, found in Pseudomonas paraeruginosa (strain DSM 24068 / PA7) (Pseudomonas aeruginosa (strain PA7)).